The sequence spans 139 residues: ATP synthase epsilon chain (139 aa).

The protein belongs to the ATPase epsilon chain family. F-type ATPases have 2 components, CF(1) - the catalytic core - and CF(0) - the membrane proton channel. CF(1) has five subunits: alpha(3), beta(3), gamma(1), delta(1), epsilon(1). CF(0) has three main subunits: a, b and c.

Its subcellular location is the cell inner membrane. Produces ATP from ADP in the presence of a proton gradient across the membrane. The protein is ATP synthase epsilon chain of Pectobacterium carotovorum subsp. carotovorum (strain PC1).